Reading from the N-terminus, the 1024-residue chain is Error-prone DNA polymerase (1024 aa).

Belongs to the DNA polymerase type-C family. DnaE2 subfamily.

The protein resides in the cytoplasm. The catalysed reaction is DNA(n) + a 2'-deoxyribonucleoside 5'-triphosphate = DNA(n+1) + diphosphate. Functionally, DNA polymerase involved in damage-induced mutagenesis and translesion synthesis (TLS). It is not the major replicative DNA polymerase. The chain is Error-prone DNA polymerase from Vibrio parahaemolyticus serotype O3:K6 (strain RIMD 2210633).